A 329-amino-acid polypeptide reads, in one-letter code: Alternative oxidase, mitochondrial (329 aa).

Residues 115-135 form a helical membrane-spanning segment; the sequence is VISRCLFLETVAGVPGMVGGM. Positions 123, 162, and 165 each coordinate Fe cation. The chain crosses the membrane as a helical span at residues 181–201; the sequence is VSIIITQAIMYLFLLVAYVIS. 3 residues coordinate Fe cation: Glu-213, Glu-266, and His-269. Residues 300 to 329 are disordered; that stretch reads EMYSNQPSGKTRTDFGSEGAKTASNVNKHV.

The protein belongs to the alternative oxidase family. Homodimer; disulfide-linked. The cofactor is Fe cation.

It is found in the mitochondrion inner membrane. Functionally, catalyzes cyanide-resistant oxygen consumption. May increase respiration when the cytochrome respiratory pathway is restricted, or in response to low temperatures. This is Alternative oxidase, mitochondrial (AOX) from Trypanosoma brucei brucei.